We begin with the raw amino-acid sequence, 831 residues long: Multiphosphoryl transfer protein 1 (831 aa).

Residues 1–90 (MLTIQFLCPL…EYIQVRFIDS (90 aa)) form the HPr domain. The Pros-phosphohistidine intermediate; for HPr activity role is filled by His15. The residue at position 15 (His15) is a Phosphohistidine; by EI. The PTS EI stretch occupies residues 119 to 650 (GNVLASGVGV…AVKSQLRQLD (532 aa)). His298 serves as the catalytic Tele-phosphohistidine intermediate; for PTS EI activity. His298 is modified (phosphohistidine; by autocatalysis). Residues Arg405 and Arg441 each contribute to the phosphoenolpyruvate site. Mg(2+)-binding residues include Glu540 and Asp564. Phosphoenolpyruvate contacts are provided by residues 563–564 (ND) and Arg574. Cys611 serves as the catalytic Proton donor; for EI activity. A PTS EIIA type-2 domain is found at 685-828 (PLLALENIFV…QSILTLLETE (144 aa)). The active-site Tele-phosphohistidine intermediate; for PTS EIIA activity is the His747. Phosphohistidine; by HPr is present on His747.

This sequence belongs to the PEP-utilizing enzyme family. Requires Mg(2+) as cofactor.

The protein resides in the cytoplasm. It catalyses the reaction L-histidyl-[protein] + phosphoenolpyruvate = N(pros)-phospho-L-histidyl-[protein] + pyruvate. It carries out the reaction D-fructose(out) + N(pros)-phospho-L-histidyl-[protein] = D-fructose 1-phosphate(in) + L-histidyl-[protein]. Its function is as follows. Multifunctional protein that includes general (non sugar-specific) and sugar-specific components of the phosphoenolpyruvate-dependent sugar phosphotransferase system (sugar PTS). This major carbohydrate active transport system catalyzes the phosphorylation of incoming sugar substrates concomitantly with their translocation across the cell membrane. The enzyme II FryABC PTS system is involved in fructose transport. The polypeptide is Multiphosphoryl transfer protein 1 (fryA) (Escherichia coli (strain K12)).